The primary structure comprises 75 residues: UPF0352 protein VP2129 (75 aa).

It belongs to the UPF0352 family.

The chain is UPF0352 protein VP2129 from Vibrio parahaemolyticus serotype O3:K6 (strain RIMD 2210633).